A 210-amino-acid polypeptide reads, in one-letter code: Transmembrane protein 61 (210 aa).

A run of 2 helical transmembrane segments spans residues 18 to 38 and 69 to 89; these read YCMTVSGTVVLVAGTLCFAWW and VSFVCCGAGGLLLLIGLLWSV. Positions 140–172 are disordered; the sequence is VAEGPPTPPAYPTEEALEPSGSRDALLSTQPAW.

Its subcellular location is the membrane. This chain is Transmembrane protein 61 (TMEM61), found in Homo sapiens (Human).